Reading from the N-terminus, the 122-residue chain is Large ribosomal subunit protein bL12 (122 aa).

It belongs to the bacterial ribosomal protein bL12 family. Homodimer. Part of the ribosomal stalk of the 50S ribosomal subunit. Forms a multimeric L10(L12)X complex, where L10 forms an elongated spine to which 2 to 4 L12 dimers bind in a sequential fashion. Binds GTP-bound translation factors.

Its function is as follows. Forms part of the ribosomal stalk which helps the ribosome interact with GTP-bound translation factors. Is thus essential for accurate translation. The polypeptide is Large ribosomal subunit protein bL12 (Levilactobacillus brevis (strain ATCC 367 / BCRC 12310 / CIP 105137 / JCM 1170 / LMG 11437 / NCIMB 947 / NCTC 947) (Lactobacillus brevis)).